We begin with the raw amino-acid sequence, 711 residues long: Ribosomal RNA large subunit methyltransferase K/L (711 aa).

A THUMP domain is found at 43–154 (LGYRITLWSR…RGQITIGLNF (112 aa)).

This sequence belongs to the methyltransferase superfamily. RlmKL family.

It is found in the cytoplasm. It carries out the reaction guanosine(2445) in 23S rRNA + S-adenosyl-L-methionine = N(2)-methylguanosine(2445) in 23S rRNA + S-adenosyl-L-homocysteine + H(+). The enzyme catalyses guanosine(2069) in 23S rRNA + S-adenosyl-L-methionine = N(2)-methylguanosine(2069) in 23S rRNA + S-adenosyl-L-homocysteine + H(+). Its function is as follows. Specifically methylates the guanine in position 2445 (m2G2445) and the guanine in position 2069 (m7G2069) of 23S rRNA. In Shewanella sediminis (strain HAW-EB3), this protein is Ribosomal RNA large subunit methyltransferase K/L.